Consider the following 508-residue polypeptide: Ribonuclease Y (508 aa).

Residues 198–264 enclose the KH domain; that stretch reads TVSVINLPND…RLTIEKLITD (67 aa). In terms of domain architecture, HD spans 324–417; sequence VLTHSIEVAK…VQAADAVSAS (94 aa).

Belongs to the RNase Y family.

Its function is as follows. Endoribonuclease that initiates mRNA decay. This chain is Ribonuclease Y, found in Fusobacterium nucleatum subsp. nucleatum (strain ATCC 25586 / DSM 15643 / BCRC 10681 / CIP 101130 / JCM 8532 / KCTC 2640 / LMG 13131 / VPI 4355).